Consider the following 368-residue polypeptide: Xaa-Pro dipeptidase (368 aa).

Mn(2+) contacts are provided by Asp223, Asp234, His298, Glu327, and Glu341.

It belongs to the peptidase M24B family. Mn(2+) serves as cofactor.

It localises to the cytoplasm. It carries out the reaction Xaa-L-Pro dipeptide + H2O = an L-alpha-amino acid + L-proline. The sequence is that of Xaa-Pro dipeptidase (pepQ) from Lactobacillus delbrueckii subsp. lactis.